The following is a 454-amino-acid chain: tRNA modification GTPase MnmE (454 aa).

The (6S)-5-formyl-5,6,7,8-tetrahydrofolate site is built by Arg23, Glu80, and Lys120. The region spanning 216-377 is the TrmE-type G domain; the sequence is GMKVVIAGRP…LRDHLKQSMG (162 aa). Asn226 lines the K(+) pocket. Residues 226 to 231, 245 to 251, 270 to 273, 335 to 338, and 358 to 360 contribute to the GTP site; these read NAGKSS, TDIAGTT, DTAG, NKAD, and SAR. Residue Ser230 participates in Mg(2+) binding. Residues Thr245, Ile247, and Thr250 each contribute to the K(+) site. Residue Thr251 coordinates Mg(2+). Lys454 provides a ligand contact to (6S)-5-formyl-5,6,7,8-tetrahydrofolate.

Belongs to the TRAFAC class TrmE-Era-EngA-EngB-Septin-like GTPase superfamily. TrmE GTPase family. As to quaternary structure, homodimer. Heterotetramer of two MnmE and two MnmG subunits. K(+) serves as cofactor.

It is found in the cytoplasm. In terms of biological role, exhibits a very high intrinsic GTPase hydrolysis rate. Involved in the addition of a carboxymethylaminomethyl (cmnm) group at the wobble position (U34) of certain tRNAs, forming tRNA-cmnm(5)s(2)U34. This is tRNA modification GTPase MnmE from Pectobacterium carotovorum subsp. carotovorum (strain PC1).